Consider the following 423-residue polypeptide: Gamma-glutamyl phosphate reductase (423 aa).

Belongs to the gamma-glutamyl phosphate reductase family.

Its subcellular location is the cytoplasm. The catalysed reaction is L-glutamate 5-semialdehyde + phosphate + NADP(+) = L-glutamyl 5-phosphate + NADPH + H(+). The protein operates within amino-acid biosynthesis; L-proline biosynthesis; L-glutamate 5-semialdehyde from L-glutamate: step 2/2. Functionally, catalyzes the NADPH-dependent reduction of L-glutamate 5-phosphate into L-glutamate 5-semialdehyde and phosphate. The product spontaneously undergoes cyclization to form 1-pyrroline-5-carboxylate. The polypeptide is Gamma-glutamyl phosphate reductase (Pseudomonas fluorescens (strain Pf0-1)).